We begin with the raw amino-acid sequence, 392 residues long: Succinate--CoA ligase [ADP-forming] subunit beta (392 aa).

An ATP-grasp domain is found at 9–247; the sequence is KAILRKYGVA…VTEEDPLEVE (239 aa). ATP is bound by residues Lys49, 56–58, Glu102, Leu105, and Glu110; that span reads GRG. Mg(2+) contacts are provided by Asn202 and Asp216. Substrate-binding positions include Asn267 and 324-326; that span reads GIL.

The protein belongs to the succinate/malate CoA ligase beta subunit family. In terms of assembly, heterotetramer of two alpha and two beta subunits. Requires Mg(2+) as cofactor.

The enzyme catalyses succinate + ATP + CoA = succinyl-CoA + ADP + phosphate. The catalysed reaction is GTP + succinate + CoA = succinyl-CoA + GDP + phosphate. Its pathway is carbohydrate metabolism; tricarboxylic acid cycle; succinate from succinyl-CoA (ligase route): step 1/1. Its function is as follows. Succinyl-CoA synthetase functions in the citric acid cycle (TCA), coupling the hydrolysis of succinyl-CoA to the synthesis of either ATP or GTP and thus represents the only step of substrate-level phosphorylation in the TCA. The beta subunit provides nucleotide specificity of the enzyme and binds the substrate succinate, while the binding sites for coenzyme A and phosphate are found in the alpha subunit. This is Succinate--CoA ligase [ADP-forming] subunit beta from Koribacter versatilis (strain Ellin345).